The following is a 493-amino-acid chain: Tripartite motif-containing protein 5 (493 aa).

N-acetylalanine is present on Ala-2. An RING-type zinc finger spans residues Cys-15–Arg-59. Ser-86 is modified (phosphoserine). Residues Gln-90–Glu-132 form a B box-type zinc finger. Residues Cys-95, His-98, Cys-117, and His-123 each contribute to the Zn(2+) site. The stretch at Thr-131–Gln-240 forms a coiled coil. The interval Phe-185–Asn-198 is required for interaction with GABARAP and for autophagy. Residues Leu-281–Ser-493 enclose the B30.2/SPRY domain.

This sequence belongs to the TRIM/RBCC family. In terms of assembly, can form homodimers and homotrimers. In addition to lower-order dimerization, also exhibits a higher-order multimerization and both low- and high-order multimerizations are essential for its restriction activity. Interacts with BTBD1 and BTBD2. Interacts with PSMC4, PSMC5, PSMD7 and HSPA8/HSC70. Interacts (via B30.2/SPRY domain) with HSPA1A/B. Interacts with PSMC2, MAP3K7/TAK1, TAB2 and TAB3. Interacts with SQSTM1. Interacts with TRIM6 and TRIM34. Interacts with ULK1 (phosphorylated form), GABARAP, GABARAPL1, GABARAPL2, MAP1LC3A, MAP1LC3C and BECN1. In terms of processing, degraded in a proteasome-independent fashion in the absence of viral infection but in a proteasome-dependent fashion following exposure to restriction sensitive virus. Autoubiquitinated in a RING finger- and UBE2D2-dependent manner. Monoubiquitinated by TRIM21. Deubiquitinated by Yersinia YopJ. Ubiquitination may not lead to proteasomal degradation.

It is found in the cytoplasm. It localises to the nucleus. It catalyses the reaction S-ubiquitinyl-[E2 ubiquitin-conjugating enzyme]-L-cysteine + [acceptor protein]-L-lysine = [E2 ubiquitin-conjugating enzyme]-L-cysteine + N(6)-ubiquitinyl-[acceptor protein]-L-lysine.. The protein operates within protein modification; protein ubiquitination. Functionally, capsid-specific restriction factor that prevents infection from non-host-adapted retroviruses. Blocks viral replication early in the life cycle, after viral entry but before reverse transcription. In addition to acting as a capsid-specific restriction factor, also acts as a pattern recognition receptor that activates innate immune signaling in response to the retroviral capsid lattice. Binding to the viral capsid triggers its E3 ubiquitin ligase activity, and in concert with the heterodimeric ubiquitin conjugating enzyme complex UBE2V1-UBE2N (also known as UBC13-UEV1A complex) generates 'Lys-63'-linked polyubiquitin chains, which in turn are catalysts in the autophosphorylation of the MAP3K7/TAK1 complex (includes TAK1, TAB2, and TAB3). Activation of the MAP3K7/TAK1 complex by autophosphorylation results in the induction and expression of NF-kappa-B and MAPK-responsive inflammatory genes, thereby leading to an innate immune response in the infected cell. Plays a role in regulating autophagy through activation of autophagy regulator BECN1 by causing its dissociation from its inhibitors BCL2 and TAB2. The chain is Tripartite motif-containing protein 5 (TRIM5) from Pan paniscus (Pygmy chimpanzee).